Consider the following 625-residue polypeptide: Putative surface protein bspA-like (625 aa).

Over 1–548 (MMTPGKSSKT…KAIKGGEIAG (548 aa)) the chain is Extracellular. N15 carries an N-linked (GlcNAc...) asparagine glycan. 13 LRR repeats span residues 38–60 (CSSFTSIIIPNSVTSIGTKAFTG), 61–83 (CSSLTSITIGNSVTSFGQEAFSE), 85–106 (SSITSITIPNSVTTIRDFAFSG), 107–129 (CSKLTSITIPNSVTSLGSHAFRG), 153–175 (CSSLTSITIPNSVTSIYSSAFYG), 176–198 (CSSLTSITIPDSVLDFGSAAFQE), 200–221 (SKLTNIKIGNNVDSIGSLAFKR), 222–245 (CSSLTNITIPDSVTTIANSAFYEC), 247–267 (KLTSITIGKSVTRIEGNAFSK), 271–293 (LTSITIKTTNDITSSITTDVFLN), 325–347 (IPKSDSNSMIRLQEITSLPTLTH), 348–368 (FTNLNKVTIENINELTIPESF), and 369–392 (IEGDNFEILITNNIKSIDPNAFKD). An N-linked (GlcNAc...) asparagine glycan is attached at N227. The disordered stretch occupies residues 439–538 (KQSEENPNQP…TDDPSKSKEN (100 aa)). A compositionally biased stretch (low complexity) spans 443-526 (ENPNQPGENP…QPGENPSQPG (84 aa)). The helical transmembrane segment at 549 to 571 (IIIGSLIGICLVVAICFGVYYYF) threads the bilayer. At 572 to 625 (MRIKPKNKNDDNEGNQEDTIANGTNEVTNENVLATFDEQPNNESDSNGLDSAEV) the chain is on the cytoplasmic side. The interval 577–625 (KNKNDDNEGNQEDTIANGTNEVTNENVLATFDEQPNNESDSNGLDSAEV) is disordered. Positions 588–625 (EDTIANGTNEVTNENVLATFDEQPNNESDSNGLDSAEV) are enriched in polar residues.

Its subcellular location is the cell membrane. Its function is as follows. May bind host tissue. The sequence is that of Putative surface protein bspA-like (BSPAL1) from Trichomonas vaginalis.